We begin with the raw amino-acid sequence, 990 residues long: F-box/LRR-repeat protein 15 (990 aa).

Residues 190–236 (FEVHIDLTDDLLHMVFSFLNHVDLCRSAMVCRQWRVASAHEDFWRVL) enclose the F-box domain. 22 LRR repeats span residues 237-258 (NFEN…YPNA), 280-303 (LRNL…ALGE), 317-341 (LGNG…KCRV), 348-373 (CPQL…LLQL), 397-423 (LESL…CANL), 441-465 (LPML…WIAN), 466-477 (SPALEVLELDNC), 478-503 (NLLT…KFTD), 519-542 (CPAL…KQEN), 550-574 (CHSL…IFSD), 589-612 (CESL…GCRA), 614-633 (TSLE…GCDH), 640-652 (QPVA…LGIC), 653-678 (PKLS…VLSE), 734-756 (LPNL…VFKS), 758-782 (IQLK…LYKE), 785-809 (LPAL…LLAC), 813-839 (LTHL…LFDY), 882-893 (FYHLSTLNLSLS), 894-914 (VNLK…LSNC), 915-937 (CSLE…SCNM), and 949-973 (CSSL…KFRT).

The polypeptide is F-box/LRR-repeat protein 15 (FBL15) (Arabidopsis thaliana (Mouse-ear cress)).